The sequence spans 352 residues: Holliday junction branch migration complex subunit RuvB (352 aa).

The tract at residues 1 to 182 is large ATPase domain (RuvB-L); that stretch reads MRIELLNTPP…FGINSRFDYY (182 aa). ATP is bound by residues Ile21, Arg22, Gly63, Lys66, Thr67, Thr68, 129–131, Arg172, Tyr182, and Arg219; that span reads EDF. Residue Thr67 participates in Mg(2+) binding. The tract at residues 183 to 253 is small ATPAse domain (RuvB-S); it reads EPELLTRIII…IAMKTLECLE (71 aa). Positions 256 to 352 are head domain (RuvB-H); it reads EEGLDEMDKK…LPLFDESEAD (97 aa). Arg292, Arg311, and Arg316 together coordinate DNA.

This sequence belongs to the RuvB family. In terms of assembly, homohexamer. Forms an RuvA(8)-RuvB(12)-Holliday junction (HJ) complex. HJ DNA is sandwiched between 2 RuvA tetramers; dsDNA enters through RuvA and exits via RuvB. An RuvB hexamer assembles on each DNA strand where it exits the tetramer. Each RuvB hexamer is contacted by two RuvA subunits (via domain III) on 2 adjacent RuvB subunits; this complex drives branch migration. In the full resolvosome a probable DNA-RuvA(4)-RuvB(12)-RuvC(2) complex forms which resolves the HJ.

The protein resides in the cytoplasm. The enzyme catalyses ATP + H2O = ADP + phosphate + H(+). Its function is as follows. The RuvA-RuvB-RuvC complex processes Holliday junction (HJ) DNA during genetic recombination and DNA repair, while the RuvA-RuvB complex plays an important role in the rescue of blocked DNA replication forks via replication fork reversal (RFR). RuvA specifically binds to HJ cruciform DNA, conferring on it an open structure. The RuvB hexamer acts as an ATP-dependent pump, pulling dsDNA into and through the RuvAB complex. RuvB forms 2 homohexamers on either side of HJ DNA bound by 1 or 2 RuvA tetramers; 4 subunits per hexamer contact DNA at a time. Coordinated motions by a converter formed by DNA-disengaged RuvB subunits stimulates ATP hydrolysis and nucleotide exchange. Immobilization of the converter enables RuvB to convert the ATP-contained energy into a lever motion, pulling 2 nucleotides of DNA out of the RuvA tetramer per ATP hydrolyzed, thus driving DNA branch migration. The RuvB motors rotate together with the DNA substrate, which together with the progressing nucleotide cycle form the mechanistic basis for DNA recombination by continuous HJ branch migration. Branch migration allows RuvC to scan DNA until it finds its consensus sequence, where it cleaves and resolves cruciform DNA. This Chlorobium chlorochromatii (strain CaD3) protein is Holliday junction branch migration complex subunit RuvB.